Consider the following 87-residue polypeptide: Putative regulatory protein BCQ_3657 (87 aa).

The protein belongs to the RemA family.

This chain is Putative regulatory protein BCQ_3657, found in Bacillus cereus (strain Q1).